The sequence spans 444 residues: C4-dicarboxylate transport protein 3 (444 aa).

9 helical membrane-spanning segments follow: residues 22–42 (VLYV…WLWP), 60–80 (LIKM…IAHI), 95–115 (VYFE…GNLV), 162–182 (GEIL…MSLG), 198–218 (AVFG…FGAM), 236–256 (LIAT…GIIA), 321–341 (IYMT…LSFG), 346–366 (ILVV…AGFI), and 399–419 (LTNL…EGEL).

It belongs to the dicarboxylate/amino acid:cation symporter (DAACS) (TC 2.A.23) family.

It is found in the cell inner membrane. Functionally, responsible for the transport of dicarboxylates such as succinate, fumarate, and malate from the periplasm across the membrane. The polypeptide is C4-dicarboxylate transport protein 3 (Bradyrhizobium diazoefficiens (strain JCM 10833 / BCRC 13528 / IAM 13628 / NBRC 14792 / USDA 110)).